Here is a 333-residue protein sequence, read N- to C-terminus: 3-isopropylmalate/3-methylmalate dehydrogenase (333 aa).

Positions 81, 91, 112, and 203 each coordinate substrate. Positions 203, 227, and 231 each coordinate Mg(2+). NAD(+) is bound at residue 260 to 272; that stretch reads GSAPDIAGKKIAN.

It belongs to the isocitrate and isopropylmalate dehydrogenases family. Homotetramer. Mg(2+) serves as cofactor. Requires Mn(2+) as cofactor.

It is found in the cytoplasm. It catalyses the reaction (2R,3S)-3-isopropylmalate + NAD(+) = 4-methyl-2-oxopentanoate + CO2 + NADH. The catalysed reaction is (2R,3S)-3-methylmalate + NAD(+) = 2-oxobutanoate + CO2 + NADH. It carries out the reaction (R)-malate + NAD(+) = pyruvate + CO2 + NADH. It functions in the pathway amino-acid biosynthesis; L-leucine biosynthesis; L-leucine from 3-methyl-2-oxobutanoate: step 3/4. Its pathway is amino-acid biosynthesis; L-isoleucine biosynthesis; 2-oxobutanoate from pyruvate: step 3/3. Functionally, catalyzes the oxidation of 3-carboxy-2-hydroxy-4-methylpentanoate (3-isopropylmalate) to 3-carboxy-4-methyl-2-oxopentanoate, which decarboxylates to 4-methyl-2-oxopentanoate (2-oxoisocaproate). Also catalyzes the oxidative decarboxylation of 3-methylmalate to 2-oxobutyrate, and that of D-malate to pyruvate. Cannot use NADP(+) instead of NAD(+). Cannot catalyze the oxidation of L-malate, L-tartrate, D-tartrate, DL-isocitrate, or DL-lactate. The sequence is that of 3-isopropylmalate/3-methylmalate dehydrogenase (leuB) from Methanocaldococcus jannaschii (strain ATCC 43067 / DSM 2661 / JAL-1 / JCM 10045 / NBRC 100440) (Methanococcus jannaschii).